Reading from the N-terminus, the 247-residue chain is O-methyltransferase imqG (247 aa).

Residues Glu84, 86–87, and Ala138 contribute to the S-adenosyl-L-methionine site; that span reads GT. A divalent metal cation-binding residues include Asp163, Asp189, and Asn190. Substrate is bound at residue Asp163.

The protein belongs to the class I-like SAM-binding methyltransferase superfamily. Cation-dependent O-methyltransferase family. CCoAMT subfamily. In terms of assembly, homodimer. A divalent metal cation is required as a cofactor.

Its pathway is secondary metabolite biosynthesis. In terms of biological role, O-methyltransferase; part of the gene cluster that mediates the biosynthesis of imizoquins A to D, tripeptide-derived alkaloids that serve a protective role against oxidative stress that are essential for normal germination. ImqB is a canonical three-module NRPS that assembles the tripeptide backbone of the imizoquins via condensation of Trp, Tyr, and Leu-derived precursors. N-methylation by imqF and phenol oxidation by imqC, followed by cyclization via the FAD-dependent oxidase imqH carry out the three-step transformation of L-tyrosine into tetrahydroisoquinoline. Importantly, this sequence requires the presence of a free amine in the tyrosine moiety, indicating that isoquinoline formation occurs prior to peptide bond formation. The imidazolidin-4-one ring of imizoquins could form following additional oxidation of the methyl-derived bridgehead carbon by imqH. Lastly, O-methylation by imqG and leucine hydroxylation by imqE complete biosynthesis of the imizoquins. The polypeptide is O-methyltransferase imqG (Aspergillus flavus (strain ATCC 200026 / FGSC A1120 / IAM 13836 / NRRL 3357 / JCM 12722 / SRRC 167)).